The following is a 154-amino-acid chain: SsrA-binding protein (154 aa).

Positions 134–154 are disordered; the sequence is KRQAIKERQTQREIQRELKER.

This sequence belongs to the SmpB family.

It is found in the cytoplasm. In terms of biological role, required for rescue of stalled ribosomes mediated by trans-translation. Binds to transfer-messenger RNA (tmRNA), required for stable association of tmRNA with ribosomes. tmRNA and SmpB together mimic tRNA shape, replacing the anticodon stem-loop with SmpB. tmRNA is encoded by the ssrA gene; the 2 termini fold to resemble tRNA(Ala) and it encodes a 'tag peptide', a short internal open reading frame. During trans-translation Ala-aminoacylated tmRNA acts like a tRNA, entering the A-site of stalled ribosomes, displacing the stalled mRNA. The ribosome then switches to translate the ORF on the tmRNA; the nascent peptide is terminated with the 'tag peptide' encoded by the tmRNA and targeted for degradation. The ribosome is freed to recommence translation, which seems to be the essential function of trans-translation. The polypeptide is SsrA-binding protein (Synechococcus sp. (strain JA-2-3B'a(2-13)) (Cyanobacteria bacterium Yellowstone B-Prime)).